The primary structure comprises 405 residues: Deoxyguanosinetriphosphate triphosphohydrolase-like protein (405 aa).

The HD domain occupies arginine 75–asparagine 219.

This sequence belongs to the dGTPase family. Type 2 subfamily.

The sequence is that of Deoxyguanosinetriphosphate triphosphohydrolase-like protein from Rhizobium johnstonii (strain DSM 114642 / LMG 32736 / 3841) (Rhizobium leguminosarum bv. viciae).